Consider the following 269-residue polypeptide: MSRLQTRFAELKQADRAALVTFVTAGDPDYETSLAILKGLPEAGADVIELGMPFTDPMADGPAIQLANIRALGAGQNLVKTLRMVRAFREGDRTTPLVLMGYFNPIHYYGVERFIAEAREAGVDGLIVVDLPPEHNEDLCDPAQAAGLDFIRLTTPTTDDKRLPRVLAGSSGFVYYVSVAGVTGAHAASLEHVEQAVARLRRHTDLPLCIGFGIRSPEHAGSVARLAEGVVVGSALVDRIAKAGSKEQAVGDVLGLCRELAEGVRRARR.

Catalysis depends on proton acceptor residues E49 and D60.

This sequence belongs to the TrpA family. In terms of assembly, tetramer of two alpha and two beta chains.

It catalyses the reaction (1S,2R)-1-C-(indol-3-yl)glycerol 3-phosphate + L-serine = D-glyceraldehyde 3-phosphate + L-tryptophan + H2O. The protein operates within amino-acid biosynthesis; L-tryptophan biosynthesis; L-tryptophan from chorismate: step 5/5. The alpha subunit is responsible for the aldol cleavage of indoleglycerol phosphate to indole and glyceraldehyde 3-phosphate. The polypeptide is Tryptophan synthase alpha chain (Azotobacter vinelandii (strain DJ / ATCC BAA-1303)).